Consider the following 2146-residue polypeptide: Conidial pigment polyketide synthase alb1 (2146 aa).

Residues 8–244 (YLFGDQTISC…KAPGVSGPYH (237 aa)) are N-terminal acylcarrier protein transacylase domain (SAT). The Ketosynthase family 3 (KS3) domain occupies 375 to 806 (RSKIAIIGMS…GGNTALLMED (432 aa)). Residues Cys-547, His-682, and His-724 each act as for beta-ketoacyl synthase activity in the active site. The malonyl-CoA:ACP transacylase (MAT) domain stretch occupies residues 911-1232 (GFVFTGQGAQ…LSTLHLAGVE (322 aa)). The active-site For acyl/malonyl transferase activity is the Ser-1001. A product template (PT) domain region spans residues 1290-1602 (TTAAQKIVEC…ARKILDTVLP (313 aa)). The tract at residues 1294–1427 (QKIVECREDG…VKLFNCAERE (134 aa)) is N-terminal hotdog fold. In terms of domain architecture, PKS/mFAS DH spans 1294–1598 (QKIVECREDG…FQALARKILD (305 aa)). The Proton acceptor; for dehydratase activity role is filled by His-1326. The interval 1453–1598 (AHRMQRGMVY…FQALARKILD (146 aa)) is C-terminal hotdog fold. Asp-1511 (proton donor; for dehydratase activity) is an active-site residue. The segment at 1611–1644 (GAPAPAPARPIGEKKAPPPIKVTGPPKPNPSNAR) is disordered. A compositionally biased stretch (pro residues) spans 1627 to 1639 (PPPIKVTGPPKPN). A Carrier 1 domain is found at 1647-1721 (SPVVARALEI…DFKAYLAEKG (75 aa)). Ser-1681 is modified (O-(pantetheine 4'-phosphoryl)serine). Positions 1724–1769 (DSSSPEPSSEPESKFSFNSDASSEASSGLTTPGITSPVKHEAPKGG) are disordered. The span at 1738–1750 (FSFNSDASSEASS) shows a compositional bias: low complexity. The Carrier 2 domain maps to 1768 to 1845 (GGQNKVWKSI…AVQAALDLKP (78 aa)). Ser-1805 bears the O-(pantetheine 4'-phosphoryl)serine mark. The tract at residues 1892–2019 (KLFMFPDGSG…SIGLFGDGKR (128 aa)) is claisen cyclase domain. Ser-1962 serves as the catalytic For Claisen cyclase activity.

The protein localises to the endosome. The enzyme catalyses 6 malonyl-CoA + acetyl-CoA + 6 H(+) = naphtopyrone YWA1 + 6 CO2 + 7 CoA + H2O. Its pathway is pigment biosynthesis; melanin biosynthesis. Functionally, non-reducing polyketide synthase; part of the gene cluster that mediates the biosynthesis of dihydroxynaphthalene (DHN)-melanin, a bluish-green pigment and a structural component of the conidial wall. The first step of the pathway is the production of the heptaketide naphtopyrone YWA1 by the polyketide synthase alb1 though condensation of acetyl-CoA with malonyl-CoA. The naphtopyrone YWA1 is then converted to the pentaketide 1,3,6,8-tetrahydroxynaphthalene (1,3,6,8-THN) by the heptaketide hydrolyase ayg1 though chain-length shortening. 1,3,6,8-THN is substrate of the hydroxynaphthalene reductase arp2 to yield scytalone. The scytalone dehydratase arp1 then reduces scytalone to 1,3,8-THN. 1,3,8-THN is also substrate of the hydroxynaphthalene reductase arp2 to yield vermelone. Vermelone is further converted by the multicopper oxidase abr1 to 1,8-DHN. Finally the laccase abr2 transforms 1,8-DHN to DHN-melanin. DHN-melanin biosynthesis appears to be initiated in endosomes where early enzymes (abl1, ayg1, arp1 and arp2) localize, with exocytosis leading to melanin deposition on the cell surface where late enzymes (abr1 and abr2) localize. DHN-melanin is an important structural component of the outer cell wall and is required for the presence of conidial surface hydrophobins. DHN-melanin also plays a crucial role in fungal virulence, including a protective role against the host's immune defenses. DHN-melanin protects also conidia against amoeba predation. In Aspergillus fumigatus (strain ATCC MYA-4609 / CBS 101355 / FGSC A1100 / Af293) (Neosartorya fumigata), this protein is Conidial pigment polyketide synthase alb1.